Reading from the N-terminus, the 311-residue chain is L-lactate dehydrogenase (311 aa).

NAD(+)-binding positions include Val12, Asp33, Lys38, Tyr63, and 77-78 (GA). Residues Gln80, Arg86, and 118–121 (NPVD) each bind substrate. NAD(+) is bound by residues 116 to 118 (VTN) and Ser141. A substrate-binding site is contributed by 146–149 (DSAR). Positions 151 and 166 each coordinate beta-D-fructose 1,6-bisphosphate. The active-site Proton acceptor is His173. Tyr219 is subject to Phosphotyrosine. Thr228 contacts substrate.

It belongs to the LDH/MDH superfamily. LDH family. In terms of assembly, homotetramer.

The protein localises to the cytoplasm. It carries out the reaction (S)-lactate + NAD(+) = pyruvate + NADH + H(+). Its pathway is fermentation; pyruvate fermentation to lactate; (S)-lactate from pyruvate: step 1/1. Allosterically activated by fructose 1,6-bisphosphate (FBP). Its function is as follows. Catalyzes the conversion of lactate to pyruvate. This Thermoanaerobacter pseudethanolicus (strain ATCC 33223 / 39E) (Clostridium thermohydrosulfuricum) protein is L-lactate dehydrogenase.